Here is a 234-residue protein sequence, read N- to C-terminus: Glutathione S-transferase U16 (234 aa).

The GST N-terminal domain maps to 5-85 (EEVKLLGVWY…YIDETWNSSA (81 aa)). Residues 15 to 16 (SP), 42 to 43 (SK), 56 to 57 (KV), and 69 to 70 (ES) each bind glutathione. The 128-residue stretch at 92–219 (HPYDRALARF…APEIEKVAEF (128 aa)) folds into the GST C-terminal domain.

This sequence belongs to the GST superfamily. Tau family.

It is found in the cytoplasm. The protein localises to the cytosol. The enzyme catalyses RX + glutathione = an S-substituted glutathione + a halide anion + H(+). May be involved in the conjugation of reduced glutathione to a wide number of exogenous and endogenous hydrophobic electrophiles and have a detoxification role against certain herbicides. The sequence is that of Glutathione S-transferase U16 (GSTU16) from Arabidopsis thaliana (Mouse-ear cress).